The sequence spans 202 residues: Transmembrane protein 223 (202 aa).

The Mitochondrial matrix segment spans residues 1–43 (MAAPGRRWSVLLFRALQSLSARRALHDTAPPRDVLLFEHERGR). The helical transmembrane segment at 44–64 (FFAVLGLFCAGQGVFWASLAI) threads the bilayer. Topologically, residues 65-97 (ASLARPPTPVRPTDAKTPDHGGLDLRSTLWRYG) are mitochondrial intermembrane. Residues 98–118 (LAVGCGAIGSLVLGAGLLFSL) form a helical membrane-spanning segment. Residues 119–202 (RSVRSVMLRA…DNTVGAYRSL (84 aa)) lie on the Mitochondrial matrix side of the membrane.

It belongs to the TMEM223 family. As to quaternary structure, associates with the mitochondrial ribosome.

The protein localises to the mitochondrion inner membrane. In terms of biological role, mitochondrial ribosome-associated protein involved in the first steps of cytochrome c oxidase complex (complex IV) biogenesis. Stimulates the translation of MT-CO1 mRNA and is a constituent of early MT-CO1 assembly intermediates. The chain is Transmembrane protein 223 from Bos taurus (Bovine).